The primary structure comprises 579 residues: Arginine--tRNA ligase (579 aa).

The 'HIGH' region motif lies at 127 to 137 (PNLAKEMHVGH).

It belongs to the class-I aminoacyl-tRNA synthetase family. As to quaternary structure, monomer.

It localises to the cytoplasm. It carries out the reaction tRNA(Arg) + L-arginine + ATP = L-arginyl-tRNA(Arg) + AMP + diphosphate. The sequence is that of Arginine--tRNA ligase from Stutzerimonas stutzeri (strain A1501) (Pseudomonas stutzeri).